The sequence spans 1679 residues: MEDSAQDAVTAAPSGTPKSKLETLPREDLIKFAKKQMMLLQKAKARCTELDKEVEELKSKPVDGGTDDMIKVLTERLDALLLEKAETEQQCLCLKKENIKMKQEVEDSVTKLEETQKEFEQSHRNYVREMESVKNELIAVHSEHSKEKAALQRDLEGAVHRQAELLEQLKSQSDSEDNVKKLQEEIQNITAAFEEQTSCLQKQLEATSDEKQQEIIHLQKVIEDNAQHYQKDINTFQEEIVQLRATHKEEVNELMSQMETLAKEHEAAVNKLKENRVTLCETSETIPENYQCESESLNEDTSDASQENQKCSVALQEDPFAEHTVYDKVRQLEDSLKELESQHSILKDEVTYMNNLKLKLEMDAQHIKDEFFHEREDLEFKINELLLAKEEQSYVVEKLKYEREDLNRQLCCTVEQHNKEIQRLQEHHQKEISELSETFMSGSEKEKLALMFEIQGLKEQCENLQHEKQEVVLNYESLREMMEILQTELGESAGKISQEFETMKQQQASDVHELQQKLRTAFNEKDALLETINRLQGENEKLLSQELVSELESTMKNLKADNSMYLASLGQKDTLLQELEAKISSLAEEKDDFISKIKTSREEIDDLHQKWEREQKLSVELREAAEQAAQHNSELRQRVSELTGKLDEILREKSQNDQNIMVQMKTMTEDQEALSSKIKSLYEENNRLHSEKVQLSRDLEALQSQQDFAYKEHVAEFEKKLQLMVEERDDLNKLLENEQLQKSFVKTQLYEFLKQMRPSILEDNEEEDVVTVLKAVGESLVTVKEEKHNLVFEYDARVLELERRIKCLQEESVVQCEELRALVRDSEQEKILLRKELDEVTSTKEALQCDILEMKNTNEKTSLENQTLSTRVEELSRSLHSKNEVHNEKDLVIEHENLRLSLEQRESELQDVRAELMLLKDSLEKSPSVKNDQLSLVKELEEKIESLEKESKDKDEKISKIKLVAVRAKKELDSNRKEAQTLRDELESVQSEKDRLSASMKEFIQGAESYKNLLLEYDKQSEQLDVEKERANNFEHHIEDLTKQLRDSTCQYEKLTSDNEDLLARIETLQANARLLEAQILEVQRAKGVVEKELEAEKLQKEQKIKEHVSTTNELEELQLQFQKEKKQLQKTMQELELVKKDAQQTTLMNMEIADYERLMKELNQKLTNKNSKIEDLEQEMKIQKQKQETLQEEMTSLQSSVQHYEEKNAQIKQLLVKTKKELADAKQAETDHLLLQASLKGELEASQQQVEVYKIQLAEMTSEKHKIHEHLKTSAEQHQRTLSAYQQRVVALQEESRTAKAEQAAVTSEFENYKVRVHNVLKQQKNKSVSQAETEGAKQEREHLEMLIDQLKIKLQDSQNSLQISVSEFQTLQSEHDTLLERHNRMLQETVTKEAELREKLCSAQSENTMLKSEHAQTMCQLTSQNEALRNSFRDQVRHLQDEHRKTVETLQHQLSKVETQLFQLKSEPPTKSPASSHQPSKSLRERRTTDLPLLDMHTVTREEGEGMETTDSESVSSAGTHIQSLEQLLSSPDSKLERLTEASLWHTEFTKEELAEKLSSTTKSADHLNGLLRETEATNAILMEQIKLLKSEIRRLERNQEREKSVANLEYLKNVLLRFIFLKPGSERERLLPVIDTMLQLSPEEKGKLATVAQGEEESASRSSGWASYLHSWSGLR.

Residue methionine 1 is modified to N-acetylmethionine. Disordered regions lie at residues 1 to 23 (MEDS…KLET) and 1466 to 1522 (LKSE…SAGT). Residues 35–1469 (KQMMLLQKAK…ETQLFQLKSE (1435 aa)) are a coiled coil. A phosphoserine mark is found at serine 1474 and serine 1478. A compositionally biased stretch (polar residues) spans 1474-1483 (SPASSHQPSK). Residues 1569–1608 (HLNGLLRETEATNAILMEQIKLLKSEIRRLERNQEREKSV) are mediates interaction with RAB6A. The segment at 1569–1679 (HLNGLLRETE…SYLHSWSGLR (111 aa)) is mediates interaction with RAB9A. A GRIP domain is found at 1604-1654 (REKSVANLEYLKNVLLRFIFLKPGSERERLLPVIDTMLQLSPEEKGKLATV).

Homodimer. Interacts (via GRIP domain) with RAB6A (preferentially in its GTP-bound form). May interact (RAB6A-dependent) with ARL1; might be involved in GCC2 Golgi localization. Interacts with CLASP1 and CLASP2; recruits both proteins to membranes of the TGN. Interacts with STX16. Interacts (probably via GRIP domain) with RAB9A (preferentially in its GTP-bound form).

It is found in the cytoplasm. It localises to the golgi apparatus. The protein resides in the trans-Golgi network membrane. Functionally, golgin which probably tethers transport vesicles to the trans-Golgi network (TGN) and regulates vesicular transport between the endosomes and the Golgi. As a RAB9A effector it is involved in recycling of the mannose 6-phosphate receptor from the late endosomes to the TGN. May also play a role in transport between the recycling endosomes and the Golgi. Required for maintenance of the Golgi structure, it is involved in the biogenesis of noncentrosomal, Golgi-associated microtubules through recruitment of CLASP1 and CLASP2. The polypeptide is GRIP and coiled-coil domain-containing protein 2 (Gcc2) (Rattus norvegicus (Rat)).